Consider the following 178-residue polypeptide: Large ribosomal subunit protein uL6 (178 aa).

The protein belongs to the universal ribosomal protein uL6 family. In terms of assembly, part of the 50S ribosomal subunit.

This protein binds to the 23S rRNA, and is important in its secondary structure. It is located near the subunit interface in the base of the L7/L12 stalk, and near the tRNA binding site of the peptidyltransferase center. This chain is Large ribosomal subunit protein uL6, found in Clavibacter sepedonicus (Clavibacter michiganensis subsp. sepedonicus).